The chain runs to 177 residues: MGVMTGSNTAAVDMDVAAAALNRDLQDKGFLLTTAEDIINWARNGSLHWMTFGLACCAVEMMHTAMPRYDVERYGFAPRASPRQSDVMIVAGTLTNKMAPALRKVYDQMPEPRYVISMGSCANGGGYYHYSYSVVRGCDRIVPVDIYVPGCPPSAEALMYGILQLQRKIRRTGTLVR.

Cys56, Cys57, Cys121, and Cys151 together coordinate [4Fe-4S] cluster.

It belongs to the complex I 20 kDa subunit family. As to quaternary structure, NDH-1 is composed of 14 different subunits. Subunits NuoB, C, D, E, F, and G constitute the peripheral sector of the complex. It depends on [4Fe-4S] cluster as a cofactor.

The protein localises to the cell inner membrane. It catalyses the reaction a quinone + NADH + 5 H(+)(in) = a quinol + NAD(+) + 4 H(+)(out). Functionally, NDH-1 shuttles electrons from NADH, via FMN and iron-sulfur (Fe-S) centers, to quinones in the respiratory chain. The immediate electron acceptor for the enzyme in this species is believed to be ubiquinone. Couples the redox reaction to proton translocation (for every two electrons transferred, four hydrogen ions are translocated across the cytoplasmic membrane), and thus conserves the redox energy in a proton gradient. The polypeptide is NADH-quinone oxidoreductase subunit B (Rhodobacter capsulatus (Rhodopseudomonas capsulata)).